A 159-amino-acid chain; its full sequence is Succinate dehydrogenase [ubiquinone] cytochrome b small subunit, mitochondrial (159 aa).

The transit peptide at 1-56 (MAVLLKLGVLCSGQGARALLLRSRVVRPAYVSAFLQDQPTQGRCGTQHIHLSPSHH) directs the protein to the mitochondrion. The Mitochondrial matrix portion of the chain corresponds to 57–63 (SGSKAAS). Residues 64-85 (LHWTSERVVSVLLLGLIPAGYL) traverse the membrane as a helical segment. Over 86–90 (NPCSV) the chain is Mitochondrial intermembrane. Residues 91 to 111 (VDYSLAAALTLHSHWGLGQVV) traverse the membrane as a helical segment. Residue histidine 102 participates in heme b binding. Residues 112 to 120 (TDYVHGDTL) are Mitochondrial matrix-facing. A ubiquinone is bound at residue tyrosine 114. The helical transmembrane segment at 121–142 (PKAARAGLLALSALTFAGLCYF) threads the bilayer. Residues 143-159 (NYHDVGICRAVAMLWKL) lie on the Mitochondrial intermembrane side of the membrane.

It belongs to the CybS family. As to quaternary structure, component of complex II composed of four subunits: the flavoprotein (FP) SDHA, iron-sulfur protein (IP) SDHB, and a cytochrome b560 composed of SDHC and SDHD.

The protein localises to the mitochondrion inner membrane. It functions in the pathway carbohydrate metabolism; tricarboxylic acid cycle. Membrane-anchoring subunit of succinate dehydrogenase (SDH) that is involved in complex II of the mitochondrial electron transport chain and is responsible for transferring electrons from succinate to ubiquinone (coenzyme Q). SDH also oxidizes malate to the non-canonical enol form of oxaloacetate, enol-oxaloacetate. Enol-oxaloacetate, which is a potent inhibitor of the succinate dehydrogenase activity, is further isomerized into keto-oxaloacetate. This is Succinate dehydrogenase [ubiquinone] cytochrome b small subunit, mitochondrial (Sdhd) from Mus musculus (Mouse).